The chain runs to 134 residues: T-cell receptor alpha chain V region RL-5 (134 aa).

The first 20 residues, 1-20 (MFSASCSVTVVVLLITVRRT), serve as a signal peptide directing secretion. The segment at 21–114 (NGASVTQTEG…DSAVYYCALR (94 aa)) is v segment. Residues 115-134 (RGASNKLTLGTGTLLKVELN) are j segment. A glycan (N-linked (GlcNAc...) asparagine) is linked at asparagine 134.

Rearrangement with the C region would elongate the sequence with Ile-Thr-; which creates a potential N-glycosylation site at Asn-134.

This is T-cell receptor alpha chain V region RL-5 from Oryctolagus cuniculus (Rabbit).